The chain runs to 344 residues: uncharacterized protein (344 aa).

The next 8 membrane-spanning stretches (helical) occupy residues 25 to 45, 68 to 88, 104 to 124, 133 to 153, 161 to 181, 224 to 244, 276 to 296, and 302 to 322; these read GAGW…VGAV, FVDA…ADGV, GVVP…GWNC, SACA…GVGA, GVGT…LAVV, LGAF…DAAL, VFAL…PAAL, and LVTA…LAGV.

Belongs to the peptidase S58 family.

Its subcellular location is the cell membrane. In terms of biological role, aminopeptidase. This is an uncharacterized protein from Mycobacterium bovis (strain ATCC BAA-935 / AF2122/97).